Reading from the N-terminus, the 455-residue chain is Ribosomal protein uS12 methylthiotransferase RimO (455 aa).

The region spanning 21-131 is the MTTase N-terminal domain; it reads GKVGFISLGC…VVGAVHQYVP (111 aa). Residues C30, C66, C95, C164, C168, and C171 each contribute to the [4Fe-4S] cluster site. One can recognise a Radical SAM core domain in the interval 150 to 387; it reads LTPRHYAYLK…MAKQAEISAA (238 aa). The region spanning 390 to 455 is the TRAM domain; it reads QAKIGRTIDV…DEHDLWARLI (66 aa).

Belongs to the methylthiotransferase family. RimO subfamily. The cofactor is [4Fe-4S] cluster.

It localises to the cytoplasm. The enzyme catalyses L-aspartate(89)-[ribosomal protein uS12]-hydrogen + (sulfur carrier)-SH + AH2 + 2 S-adenosyl-L-methionine = 3-methylsulfanyl-L-aspartate(89)-[ribosomal protein uS12]-hydrogen + (sulfur carrier)-H + 5'-deoxyadenosine + L-methionine + A + S-adenosyl-L-homocysteine + 2 H(+). Catalyzes the methylthiolation of an aspartic acid residue of ribosomal protein uS12. The protein is Ribosomal protein uS12 methylthiotransferase RimO of Marinobacter nauticus (strain ATCC 700491 / DSM 11845 / VT8) (Marinobacter aquaeolei).